The primary structure comprises 115 residues: Dolichyl-diphosphooligosaccharide--protein glycosyltransferase subunit DAD2 (115 aa).

The Cytoplasmic segment spans residues 1–31 (MVKSTSKDAQDLFHSLHSAYTATPTNLKIID). Residues 32-52 (LYVCFAVFTALIQVAYMALVG) form a helical membrane-spanning segment. Over 53–55 (SFP) the chain is Lumenal. Residues 56-76 (FNSFLSGVLSCIGTAVLAVCL) traverse the membrane as a helical segment. Residues 77–94 (RIQVNKENKEFKDLAPER) are Cytoplasmic-facing. The chain crosses the membrane as a helical span at residues 95–115 (AFADFVLCNLVLHLVIINFLG).

Belongs to the DAD/OST2 family. Component of the oligosaccharyltransferase (OST) complex.

The protein localises to the endoplasmic reticulum membrane. It functions in the pathway protein modification; protein glycosylation. Subunit of the oligosaccharyl transferase (OST) complex that catalyzes the initial transfer of a defined glycan (Glc(3)Man(9)GlcNAc(2) in eukaryotes) from the lipid carrier dolichol-pyrophosphate to an asparagine residue within an Asn-X-Ser/Thr consensus motif in nascent polypeptide chains, the first step in protein N-glycosylation. N-glycosylation occurs cotranslationally and the complex associates with the Sec61 complex at the channel-forming translocon complex that mediates protein translocation across the endoplasmic reticulum (ER). All subunits are required for a maximal enzyme activity. In Arabidopsis thaliana (Mouse-ear cress), this protein is Dolichyl-diphosphooligosaccharide--protein glycosyltransferase subunit DAD2 (DAD2).